The primary structure comprises 450 residues: GTPase HflX (450 aa).

Disordered regions lie at residues 79-110 (TSMAPPPKSKARQRFEGAAEGAAPPEPDPDAA) and 173-196 (RLRESSGGGGRQQGPGAGESTLAL). Residues 178–189 (SGGGGRQQGPGA) are compositionally biased toward gly residues. The region spanning 230-395 (LRVALVGYTN…TLIAFFEAEM (166 aa)) is the Hflx-type G domain. GTP contacts are provided by residues 236 to 243 (GYTNAGKS), 261 to 265 (FATLD), 283 to 286 (DTVG), 349 to 352 (NKMD), and 373 to 375 (SAH). 2 residues coordinate Mg(2+): Ser-243 and Thr-263.

This sequence belongs to the TRAFAC class OBG-HflX-like GTPase superfamily. HflX GTPase family. In terms of assembly, monomer. Associates with the 50S ribosomal subunit. Requires Mg(2+) as cofactor.

It is found in the cytoplasm. In terms of biological role, GTPase that associates with the 50S ribosomal subunit and may have a role during protein synthesis or ribosome biogenesis. In Gluconacetobacter diazotrophicus (strain ATCC 49037 / DSM 5601 / CCUG 37298 / CIP 103539 / LMG 7603 / PAl5), this protein is GTPase HflX.